Here is a 455-residue protein sequence, read N- to C-terminus: Phosphoglucosamine mutase (455 aa).

Ser108 (phosphoserine intermediate) is an active-site residue. Ser108, Asp246, Asp248, and Asp250 together coordinate Mg(2+). Ser108 is modified (phosphoserine).

Belongs to the phosphohexose mutase family. Mg(2+) serves as cofactor. In terms of processing, activated by phosphorylation.

The catalysed reaction is alpha-D-glucosamine 1-phosphate = D-glucosamine 6-phosphate. Catalyzes the conversion of glucosamine-6-phosphate to glucosamine-1-phosphate. This is Phosphoglucosamine mutase from Frankia alni (strain DSM 45986 / CECT 9034 / ACN14a).